The sequence spans 358 residues: GTPase Obg (358 aa).

An Obg domain is found at 1–159 (MKFLDEAKVY…RWIWLRLKLI (159 aa)). Positions 160 to 327 (ADAGLVGLPN…VLRALVEVIG (168 aa)) constitute an OBG-type G domain. GTP is bound by residues 166–173 (GLPNAGKS), 191–195 (FTTLH), 212–215 (DIPG), 279–282 (NKID), and 308–310 (SGV). Residues serine 173 and threonine 193 each contribute to the Mg(2+) site. A disordered region spans residues 335 to 358 (AKGADASAAQAMETPVARAKPWSP).

This sequence belongs to the TRAFAC class OBG-HflX-like GTPase superfamily. OBG GTPase family. Monomer. Requires Mg(2+) as cofactor.

Its subcellular location is the cytoplasm. An essential GTPase which binds GTP, GDP and possibly (p)ppGpp with moderate affinity, with high nucleotide exchange rates and a fairly low GTP hydrolysis rate. Plays a role in control of the cell cycle, stress response, ribosome biogenesis and in those bacteria that undergo differentiation, in morphogenesis control. This is GTPase Obg from Nitrobacter winogradskyi (strain ATCC 25391 / DSM 10237 / CIP 104748 / NCIMB 11846 / Nb-255).